Here is a 457-residue protein sequence, read N- to C-terminus: ATP synthase subunit beta (457 aa).

147 to 154 (GGAGVGKT) provides a ligand contact to ATP.

This sequence belongs to the ATPase alpha/beta chains family. In terms of assembly, F-type ATPases have 2 components, CF(1) - the catalytic core - and CF(0) - the membrane proton channel. CF(1) has five subunits: alpha(3), beta(3), gamma(1), delta(1), epsilon(1). CF(0) has three main subunits: a(1), b(2) and c(9-12). The alpha and beta chains form an alternating ring which encloses part of the gamma chain. CF(1) is attached to CF(0) by a central stalk formed by the gamma and epsilon chains, while a peripheral stalk is formed by the delta and b chains.

The protein localises to the cell inner membrane. The catalysed reaction is ATP + H2O + 4 H(+)(in) = ADP + phosphate + 5 H(+)(out). In terms of biological role, produces ATP from ADP in the presence of a proton gradient across the membrane. The catalytic sites are hosted primarily by the beta subunits. This chain is ATP synthase subunit beta, found in Haemophilus ducreyi (strain 35000HP / ATCC 700724).